The sequence spans 830 residues: Pentatricopeptide repeat-containing protein At5g55740, chloroplastic (830 aa).

The transit peptide at 1-59 (MASLPFNTIPNKVPFSVSSKPSSKHHDEQAHSPSSTSYFHRVSSLCKNGEIKEALSLVT) directs the protein to the chloroplast. The tract at residues 15–36 (FSVSSKPSSKHHDEQAHSPSST) is disordered. PPR repeat units lie at residues 69–103 (GPEIYGEILQGCVYERDLSTGKQIHARILKNGDFY), 106–136 (NEYIETKLVIFYAKCDALEIAEVLFSKLRVR), 137–171 (NVFSWAAIIGVKCRIGLCEGALMGFVEMLENEIFP), 172–206 (DNFVVPNVCKACGALKWSRFGRGVHGYVVKSGLED), 207–237 (CVFVASSLADMYGKCGVLDDASKVFDEIPDR), 238–272 (NAVAWNALMVGYVQNGKNEEAIRLFSDMRKQGVEP), 273–307 (TRVTVSTCLSASANMGGVEEGKQSHAIAIVNGMEL), 308–338 (DNILGTSLLNFYCKVGLIEYAEMVFDRMFEK), 339–373 (DVVTWNLIISGYVQQGLVEDAIYMCQLMRLEKLKY), 374–408 (DCVTLATLMSAAARTENLKLGKEVQCYCIRHSFES), 409–439 (DIVLASTVMDMYAKCGSIVDAKKVFDSTVEK), 440–474 (DLILWNTLLAAYAESGLSGEALRLFYGMQLEGVPP), 475–509 (NVITWNLIILSLLRNGQVDEAKDMFLQMQSSGIIP), 510–544 (NLISWTTMMNGMVQNGCSEEAILFLRKMQESGLRP), 545–575 (NAFSITVALSACAHLASLHIGRTIHGYIIRN), 581–611 (LVSIETSLVDMYAKCGDINKAEKVFGSKLYS), 612–646 (ELPLSNAMISAYALYGNLKEAIALYRSLEGVGLKP), 647–682 (DNITITNVLSACNHAGDINQAIEIFTDIVSKRSMKP), and 683–713 (CLEHYGLMVDLLASAGETEKALRLIEEMPFK). Residues 718-793 (MIQSLVASCN…KPGCSWIQIT (76 aa)) form a type E motif region. Residues 796–826 (EGVHVFVANDKTHTRINEIQMMLALLLYDMG) form a type E(+) motif region.

This sequence belongs to the PPR family. PCMP-E subfamily.

It localises to the plastid. It is found in the chloroplast. Its function is as follows. Plays a major role in chloroplast RNA editing. Acts as a site-recognition transacting factor involved in the edition of the site 2 of ndhD (ndhD-2), which encodes a subunit of the NDH complex. In Arabidopsis thaliana (Mouse-ear cress), this protein is Pentatricopeptide repeat-containing protein At5g55740, chloroplastic (CRR21).